Reading from the N-terminus, the 122-residue chain is Large ribosomal subunit protein bL17 (122 aa).

This sequence belongs to the bacterial ribosomal protein bL17 family. As to quaternary structure, part of the 50S ribosomal subunit. Contacts protein L32.

The polypeptide is Large ribosomal subunit protein bL17 (Nautilia profundicola (strain ATCC BAA-1463 / DSM 18972 / AmH)).